We begin with the raw amino-acid sequence, 678 residues long: RxLR effector protein PITG_16705 (678 aa).

Positions 1-20 (MHLFFLTAVAFVITSVSVDA) are cleaved as a signal peptide. The RxLR-dEER motif lies at 46–61 (RLLRKNSTVDLVGEER).

It belongs to the RxLR effector family.

Its subcellular location is the secreted. The protein resides in the host cytoplasm. Effector that enhances P.infestans colonization of Nicotiana benthamiana leaves. This chain is RxLR effector protein PITG_16705, found in Phytophthora infestans (strain T30-4) (Potato late blight agent).